The chain runs to 28 residues: GLKDWWNKHKDKIVEVVKEMGKAGLNAA.

Methionine 20 is subject to Methionine sulfoxide; in form U1-PONTX-Dq4d. Alanine 28 carries the alanine amide; in form Dq-1362 and U1-PONTX-Dq4d modification.

Post-translationally, occurs in 3 forms, M-PONTX-Dq4b has an amidated Ala-28, U1-PONTX-Dq4d has an amidated Ala-28 and an oxidized Met-20, U1-PONTX-Dq4c has no modifications at either Met-20 or Ala-28. In terms of tissue distribution, expressed by the venom gland.

The protein resides in the secreted. M-poneritoxin-Dq4b: this synthetic peptide has antimicrobial activity against Gram-positive bacteria B.amyloliquefacies S499 (MIC=0.1 mM), L.monocytogenes 2231 and S.aureus ATCC 29213, against Gram-negative bacteria P.putida BTP1, P.aeruginosa PaO1 and E.coli ATCC 10536, and against the fungi S.cerevisiae, R.mucilaginosa and C.cucumerinum. Not active against the fungi F.oxysporum and B.cinerea. This chain is M-poneritoxin-Dq4b/U1-poneritoxin-Dq4c/U1-poneritoxin-Dq4d, found in Dinoponera quadriceps (South American ant).